The primary structure comprises 224 residues: Fibronectin type III domain-containing protein 9 (224 aa).

The 101-residue stretch at 1-101 (MNIEVGNISY…FHTLDKSPLA (101 aa)) folds into the Fibronectin type-III domain. A helical membrane pass occupies residues 113–133 (LWVLMAILLACFTAVLAFICL). A disordered region spans residues 175 to 224 (LQGLPLVEMPRKNSRDGAELDPEANQDAPDAGALQRGGGDPPAILPHCGE). The segment covering 183 to 192 (MPRKNSRDGA) has biased composition (basic and acidic residues).

It is found in the membrane. The chain is Fibronectin type III domain-containing protein 9 (FNDC9) from Homo sapiens (Human).